A 352-amino-acid chain; its full sequence is S-adenosylmethionine:tRNA ribosyltransferase-isomerase (352 aa).

Belongs to the QueA family. In terms of assembly, monomer.

The protein localises to the cytoplasm. The catalysed reaction is 7-aminomethyl-7-carbaguanosine(34) in tRNA + S-adenosyl-L-methionine = epoxyqueuosine(34) in tRNA + adenine + L-methionine + 2 H(+). The protein operates within tRNA modification; tRNA-queuosine biosynthesis. Functionally, transfers and isomerizes the ribose moiety from AdoMet to the 7-aminomethyl group of 7-deazaguanine (preQ1-tRNA) to give epoxyqueuosine (oQ-tRNA). The polypeptide is S-adenosylmethionine:tRNA ribosyltransferase-isomerase (Syntrophomonas wolfei subsp. wolfei (strain DSM 2245B / Goettingen)).